The primary structure comprises 81 residues: Cytotoxin 1 (81 aa).

A signal peptide spans 1–21 (MKTLLLTLVVVTIVCLDLGYT). 4 cysteine pairs are disulfide-bonded: Cys-24–Cys-42, Cys-35–Cys-59, Cys-63–Cys-74, and Cys-75–Cys-80.

The protein belongs to the three-finger toxin family. Short-chain subfamily. Type IA cytotoxin sub-subfamily. As to quaternary structure, monomer in solution; homodimer and oligomer in the presence of negatively charged lipids forming a pore with a size ranging between 20 and 30 Angstroms. Expressed by the venom gland.

The protein resides in the secreted. Its subcellular location is the target cell membrane. Its function is as follows. Shows cytolytic activity on many different cells by forming pores in lipid membranes. Exhibits concentration-dependent growth inhibitory effects in the lung cell lines A549 (IC(50)= 0.88) and NL20 (IC(50)= 1.91), in the prostate cell lines PC-3 (IC(50)= 3.13 ug/ml) and RWPE-1 (IC(50)=0.35 ug/ml), and in the breast cell lines MCF-7 (IC(50)= 9.10 ug/ml) and 184B5 (IC(50)=6.21 ug/ml), with high selectivity for the lung cancer cell line A549 (selectivity index=2.17). Induces primarily necrosis in the A549 lung cancer cell line, and mainly caspase-independent late apoptosis in the breast cancer cells line MCF-7 and in the prostate cancer cell line PC-3. The polypeptide is Cytotoxin 1 (Naja sumatrana (Equatorial spitting cobra)).